Reading from the N-terminus, the 774-residue chain is Ent-beyerene synthase KSL4, chloroplastic (774 aa).

A chloroplast-targeting transit peptide spans 1-35 (MLLGSTNTLRISSHGKEWEGKTLTGMPLGKVNQRV). 6 residues coordinate Mg(2+): Asp-525, Asp-529, Asn-668, Asp-669, Thr-672, and Glu-676. The DDXXD motif signature appears at 525 to 529 (DDFFD).

This sequence belongs to the terpene synthase family. The cofactor is Mg(2+).

It is found in the plastid. Its subcellular location is the chloroplast. The enzyme catalyses ent-copalyl diphosphate = ent-beyerene + diphosphate. It catalyses the reaction ent-copalyl diphosphate = ent-atiserene + diphosphate. It carries out the reaction ent-copalyl diphosphate = ent-kaur-16-ene + diphosphate. It participates in secondary metabolite biosynthesis; terpenoid biosynthesis. Functionally, diterpene cyclase involved in the biosynthesis of labdane-related diterpenoids (LRDs) natural products. Catalyzes the cyclization of ent-CDP into ent-beyerene as a major and ent-kaurene and ent-atiserene as minor products. The sequence is that of Ent-beyerene synthase KSL4, chloroplastic from Ricinus communis (Castor bean).